Here is a 938-residue protein sequence, read N- to C-terminus: MRFFCFGMLLPFTFVLANEGLQLPLETYITLSPEYQAAPQVGFTHNQNQDLAIVGNHNDFILDYKYYRSNGGALTCKNLLISENIGNVFFEKNVCPNSGGAIYAAQNCTISKNQNYAFTTNLVSDNPTATAGSLLGGALFAINCSITNNLGQGTFVDNLALNKGGALYTETNLSIKDNKGPIIIKQNRALNSDSLGGGIYSGNSLNIEGNSGAIQITSNSSGSGGGIFSTQTLTISSNKKLIEISENSAFANNYGSNFNPGGGGLTTTFCTILNNREGVLFNNNQSQSNGGAIHAKSIIIKENGPVYFLNNTATRGGALLNLSAGSGNGSFILSADNGDIIFNNNTASKHALNPPYRNAIHSTPNMNLQIGARPGYRVLFYDPIEHELPSSFPILFNFETGHTGTVLFSGEHVHQNFTDEMNFFSYLRNTSELRQGVLAVEDGAGLACYKFFQRGGTLLLGQGAVITTAGTIPTPSSTPTTVGSTITLNHIAIDLPSILSFQAQAPKIWIYPTKTGSTYTEDSNPTITISGTLTLRNSNNEDPYDSLDLSHSLEKVPLLYIVDVAAQKINSSQLDLSTLNSGEHYGYQGIWSTYWVETTTITNPTSLLGANTKHKLLYANWSPLGYRPHPERRGEFITNALWQSAYTALAGLHSLSSWDEEKGHAASLQGIGLLVHQKDKNGFKGFRSHMTGYSATTEATSSQSPNFSLGFAQFFSKAKEHESQNSTSSHHYFSGMCIENTLFKEWIRLSVSLAYMFTSEHTHTMYQGLLEGNSQGSFHNHTLAGALSCVFLPQPHGESLQIYPFITALAIRGNLAAFQESGDHAREFSLHRPLTDVSLPVGIRASWKNHHRVPLVWLTEISYRSTLYRQDPELHSKLLISQGTWTTQATPVTYNALGIKVKNTMQVFPKVTLSLDYSADISSSTLSHYLNVASRMRF.

Positions Met-1 to Ala-17 are cleaved as a signal peptide. Residues Asp-659–Phe-938 form the Autotransporter domain.

Belongs to the PMP outer membrane protein family.

Its subcellular location is the secreted. It is found in the cell wall. It localises to the cell outer membrane. The polypeptide is Probable outer membrane protein pmp15 (pmp15) (Chlamydia pneumoniae (Chlamydophila pneumoniae)).